Reading from the N-terminus, the 218-residue chain is MRKALKKFLKNSKCLLSIITILLYWYLRFVYFTSRQKFIFYDNRNKEKFLNEQGVIFAFWHNMLALSPAMFTGHRNVYALISPHLDGKILNALVGKFGCQVIVGSTNKNSIVALRNIIGKLSQGANIIVTPDGPKGPVYKVNSGITEIAYRYNKKLIPIVSSTSRCFRLKSWDKLIIPIPFGTIKIIVGSPLALVADKVKNHLNLEKQLKSLTESLKK.

2 helical membrane passes run 14-34 (CLLSIITILLYWYLRFVYFTS) and 175-195 (LIIPIPFGTIKIIVGSPLALV).

To H.pylori HP0270.

The protein localises to the cell membrane. This is an uncharacterized protein from Rickettsia prowazekii (strain Madrid E).